A 196-amino-acid chain; its full sequence is Flagellar transcriptional regulator FlhC (196 aa).

Zn(2+) is bound by residues cysteine 138, cysteine 141, cysteine 158, and cysteine 161.

It belongs to the FlhC family. As to quaternary structure, heterohexamer composed of two FlhC and four FlhD subunits. Each FlhC binds a FlhD dimer, forming a heterotrimer, and a hexamer assembles by dimerization of two heterotrimers. Zn(2+) is required as a cofactor.

It is found in the cytoplasm. In terms of biological role, functions in complex with FlhD as a master transcriptional regulator that regulates transcription of several flagellar and non-flagellar operons by binding to their promoter region. Activates expression of class 2 flagellar genes, including fliA, which is a flagellum-specific sigma factor that turns on the class 3 genes. Also regulates genes whose products function in a variety of physiological pathways. This chain is Flagellar transcriptional regulator FlhC, found in Sodalis glossinidius (strain morsitans).